A 1308-amino-acid chain; its full sequence is Limbin (1308 aa).

The signal sequence occupies residues 1–26 (MDPSGSRGRPTWVLAGGLLAVALALG). Residues 27–300 (GRGCLGASSR…VLPHHGLHAA (274 aa)) lie on the Extracellular side of the membrane. A disordered region spans residues 36–76 (RPRWRPLGAQPPRDPQVAPRSGPGLRIPPGRSGAGPESSTQ). Residue asparagine 220 is glycosylated (N-linked (GlcNAc...) asparagine). A helical transmembrane segment spans residues 301–321 (GFFIAFLLSLVLTWAALFLMV). Residues 322–1308 (RYQCLKGNML…KKAMRALGMD (987 aa)) are Cytoplasmic-facing. Coiled-coil stretches lie at residues 455–578 (TAEC…ELMD), 636–800 (DQME…DRDQ), and 1001–1113 (ASEM…EADT). Positions 784–801 (MAARAEQLEGEERDRDQE) are enriched in basic and acidic residues. The interval 784 to 816 (MAARAEQLEGEERDRDQEGVQSVRQRLKDDAPE) is disordered.

In terms of assembly, component of the EvC complex composed of EFCAB7, IQCE, EVC2 and EVC; built from two subcomplexes, EVC2:EVC and EFCAB7:IQCE. Interacts with EVC. Interacts (via N-terminal end) with EFCAB7. Interacts (via N-terminal end) with IQCE. Found in the heart, placenta, lung, liver, skeletal muscle, kidney and pancreas.

It is found in the cell membrane. It localises to the cytoplasm. Its subcellular location is the cytoskeleton. The protein localises to the cilium basal body. The protein resides in the cell projection. It is found in the cilium. It localises to the cilium membrane. Its subcellular location is the nucleus. Functionally, component of the EvC complex that positively regulates ciliary Hedgehog (Hh) signaling. Plays a critical role in bone formation and skeletal development. May be involved in early embryonic morphogenesis. The chain is Limbin (EVC2) from Homo sapiens (Human).